Consider the following 270-residue polypeptide: MTVLKEQPPRLLRGIPLASSGLRKTFGQREVLKGIELHIPAGQFVAIVGRSGCGKSTLLRLLAGLDQPTAGQLLAGAAPLEQAREETRLMFQDARLLPWKKVIDNVGLGLSGDWRPRALEALESVGLADRANEWPAALSGGQKQRVALARALIHQPRLLLLDEPLGALDALTRIEMQQLIERLWRQHGFTVLLVTHDVSEAVAVADRVILIEDGEVGLDLTVDLARPRARGSHRLAALESEVLNRVLSAPGAAPEPDPVAPLPTQLRWAH.

Residues 17 to 238 form the ABC transporter domain; that stretch reads LASSGLRKTF…ARGSHRLAAL (222 aa). 49 to 56 contacts ATP; that stretch reads GRSGCGKS. The disordered stretch occupies residues 249-270; that stretch reads APGAAPEPDPVAPLPTQLRWAH.

It belongs to the ABC transporter superfamily. Aliphatic sulfonates importer (TC 3.A.1.17.2) family. As to quaternary structure, the complex is composed of two ATP-binding proteins (SsuB), two transmembrane proteins (SsuC) and a solute-binding protein (SsuA).

It is found in the cell inner membrane. The catalysed reaction is ATP + H2O + aliphatic sulfonate-[sulfonate-binding protein]Side 1 = ADP + phosphate + aliphatic sulfonateSide 2 + [sulfonate-binding protein]Side 1.. In terms of biological role, part of the ABC transporter complex SsuABC involved in aliphatic sulfonates import. Responsible for energy coupling to the transport system. This Pseudomonas putida (Arthrobacter siderocapsulatus) protein is Aliphatic sulfonates import ATP-binding protein SsuB.